The following is a 279-amino-acid chain: Thymidylate synthase (279 aa).

Residue 141–142 (RR) participates in dUMP binding. Catalysis depends on C161, which acts as the Nucleophile. Residues 181–184 (RSND), N192, and 222–224 (HVY) contribute to the dUMP site. Residue D184 coordinates (6R)-5,10-methylene-5,6,7,8-tetrahydrofolate. A278 is a binding site for (6R)-5,10-methylene-5,6,7,8-tetrahydrofolate.

This sequence belongs to the thymidylate synthase family. Bacterial-type ThyA subfamily. Homodimer.

The protein resides in the cytoplasm. It carries out the reaction dUMP + (6R)-5,10-methylene-5,6,7,8-tetrahydrofolate = 7,8-dihydrofolate + dTMP. The protein operates within pyrimidine metabolism; dTTP biosynthesis. Its function is as follows. Catalyzes the reductive methylation of 2'-deoxyuridine-5'-monophosphate (dUMP) to 2'-deoxythymidine-5'-monophosphate (dTMP) while utilizing 5,10-methylenetetrahydrofolate (mTHF) as the methyl donor and reductant in the reaction, yielding dihydrofolate (DHF) as a by-product. This enzymatic reaction provides an intracellular de novo source of dTMP, an essential precursor for DNA biosynthesis. This Bacillus mojavensis protein is Thymidylate synthase.